Here is a 343-residue protein sequence, read N- to C-terminus: Heat-inducible transcription repressor HrcA (343 aa).

It belongs to the HrcA family.

Negative regulator of class I heat shock genes (grpE-dnaK-dnaJ and groELS operons). Prevents heat-shock induction of these operons. This Mycobacterium ulcerans (strain Agy99) protein is Heat-inducible transcription repressor HrcA.